A 127-amino-acid chain; its full sequence is Glycine cleavage system H protein (127 aa).

Positions 24-106 (TATIGITDYA…YAEGWMLKLK (83 aa)) constitute a Lipoyl-binding domain. Lys-65 is subject to N6-lipoyllysine.

It belongs to the GcvH family. The glycine cleavage system is composed of four proteins: P, T, L and H. Requires (R)-lipoate as cofactor.

Its function is as follows. The glycine cleavage system catalyzes the degradation of glycine. The H protein shuttles the methylamine group of glycine from the P protein to the T protein. The protein is Glycine cleavage system H protein of Opitutus terrae (strain DSM 11246 / JCM 15787 / PB90-1).